The primary structure comprises 304 residues: PHO85 cyclin-9 (304 aa).

One can recognise a Cyclin N-terminal domain in the interval 19–146 (EMIQFLATST…LLEYLNWDVR (128 aa)).

It belongs to the cyclin family. PCL1,2 subfamily. As to quaternary structure, forms a cyclin-CDK complex with PHO85.

In terms of biological role, m/G1-specific cyclin partner of the cyclin-dependent kinase (CDK) PHO85. May have a role in bud site selection in G1 phase. The polypeptide is PHO85 cyclin-9 (PCL9) (Saccharomyces cerevisiae (strain ATCC 204508 / S288c) (Baker's yeast)).